A 35-amino-acid polypeptide reads, in one-letter code: Photosystem II reaction center protein T (35 aa).

The helical transmembrane segment at 3 to 23 threads the bilayer; that stretch reads ALVYTFLLVSTLGIIFFAIFF.

It belongs to the PsbT family. As to quaternary structure, PSII is composed of 1 copy each of membrane proteins PsbA, PsbB, PsbC, PsbD, PsbE, PsbF, PsbH, PsbI, PsbJ, PsbK, PsbL, PsbM, PsbT, PsbY, PsbZ, Psb30/Ycf12, at least 3 peripheral proteins of the oxygen-evolving complex and a large number of cofactors. It forms dimeric complexes.

The protein resides in the plastid. It localises to the chloroplast thylakoid membrane. In terms of biological role, found at the monomer-monomer interface of the photosystem II (PS II) dimer, plays a role in assembly and dimerization of PSII. PSII is a light-driven water plastoquinone oxidoreductase, using light energy to abstract electrons from H(2)O, generating a proton gradient subsequently used for ATP formation. The sequence is that of Photosystem II reaction center protein T from Ginkgo biloba (Ginkgo).